The primary structure comprises 338 residues: MKSVTLDKLQRPLKDLRISVTDRCNFRCRYCMPEEIFGPDYSFLSNDKILSFDEIERITRIFVSLGVRKLRITGGEPLLRRGLPQLIERLNKVDGVEDIGLTTNGSLLKKFAPDLYKAGLSRVTVSLDSLEEERFFYLNGNRSKVQRVLEGIQAAAEVGMKIKINMVVQKGKNEQDILQMAQYFKENKHILRFIEYMDVGNYNGWELKEVVSKQEIVDMIHQVMPLERIEANYAGEVATRYSYIGSDEEIGVISSVTDSFCSSCTRARISAEGKLYTCLFASKGNDLRELLRSDYTDEEITDVVRDIWNNREDRYSDERLSNSNKKAMPKIEMSHIGG.

The 220-residue stretch at lysine 8–glutamate 227 folds into the Radical SAM core domain. Arginine 17 contacts GTP. [4Fe-4S] cluster-binding residues include cysteine 24 and cysteine 28. Tyrosine 30 provides a ligand contact to S-adenosyl-L-methionine. Cysteine 31 provides a ligand contact to [4Fe-4S] cluster. Arginine 71 is a GTP binding site. Glycine 75 contributes to the S-adenosyl-L-methionine binding site. Threonine 102 contributes to the GTP binding site. Serine 126 provides a ligand contact to S-adenosyl-L-methionine. Lysine 163 is a binding site for GTP. Methionine 197 contributes to the S-adenosyl-L-methionine binding site. [4Fe-4S] cluster is bound by residues cysteine 261 and cysteine 264. Position 266-268 (arginine 266–arginine 268) interacts with GTP. [4Fe-4S] cluster is bound at residue cysteine 278.

It belongs to the radical SAM superfamily. MoaA family. As to quaternary structure, monomer and homodimer. [4Fe-4S] cluster is required as a cofactor.

It carries out the reaction GTP + AH2 + S-adenosyl-L-methionine = (8S)-3',8-cyclo-7,8-dihydroguanosine 5'-triphosphate + 5'-deoxyadenosine + L-methionine + A + H(+). It functions in the pathway cofactor biosynthesis; molybdopterin biosynthesis. Catalyzes the cyclization of GTP to (8S)-3',8-cyclo-7,8-dihydroguanosine 5'-triphosphate. This Bacillus anthracis (strain CDC 684 / NRRL 3495) protein is GTP 3',8-cyclase.